The following is a 336-amino-acid chain: MDTNSTTPMSITDMECNPNYSYLVENIKYLLQAAYMVPPAFLYARILYVIWVKHRKVYSRHQFFVIYSMDSIVGFILLLLDIFITRFFVYVPQLCIPASKFFQSHSLLMNIYYPLLNYLHCAQPLIQIFLTLNRMSSVIWPVDHNKVWSKNLSFIVAFVSLSPFLIIWNTIISPKIIIYYFGGFFMLGLKAVEWADISLFLFLVRSVAVIITVASTVIMFLRMSKMKKRMKSSERTLCLACVIHSICFMVPSFFEALANFNEAYGSSWVNFLIQPFAWDVLNVGSPLIMIFVSGQLRHHVLEISIGCCKPKNKPKTITVHTVTAHVSSRNGTSIFR.

7 helical membrane passes run 30 to 50 (LLQAAYMVPPAFLYARILYVI), 64 to 84 (FVIYSMDSIVGFILLLLDIFI), 111 to 131 (IYYPLLNYLHCAQPLIQIFLT), 152 to 172 (LSFIVAFVSLSPFLIIWNTII), 200 to 220 (FLFLVRSVAVIITVASTVIMF), 237 to 257 (LCLACVIHSICFMVPSFFEAL), and 271 to 291 (FLIQPFAWDVLNVGSPLIMIF).

The protein belongs to the nematode receptor-like protein srg family.

It localises to the membrane. This is Serpentine receptor class gamma-9 (srg-9) from Caenorhabditis elegans.